The primary structure comprises 407 residues: UPF0597 protein NAMH_0191 (407 aa).

Belongs to the UPF0597 family.

This is UPF0597 protein NAMH_0191 from Nautilia profundicola (strain ATCC BAA-1463 / DSM 18972 / AmH).